Reading from the N-terminus, the 1674-residue chain is MTEAITEAAVASSEEVSEERDDLGPLELHDSGTFQQVVNLLDIIDSESAKTDTTGAGLDMRKTLASVIIMEKATTEPSVVINTLIRCLQVPEISTQRKVNIYNILQDIIQQEGELEEQCVQRLVAIASKEMREIPEMEGYMKAEVASDTLVALSRNHFSLVMYELQHHLKPLNLTDEFVIITLAKLANGNVFEFMPYMGITLATIFTMLRLANEAKIRQAICSAMETFCETVQFYLKHLEESVYPVMTEEEFALKVFPMYRYFVTVWLRHYNPEVKLGVIKSLKPMLGLLLPNDDLREQVYDYIPLLLAEYQGSLEVLFVTQVLRQILELSVTTNTPVPQMQLHTIFTELHVQVCNKAPAQHQYSSQNLMEMVHCFVALARSYPKELMKFFFSQMETNKEAVRVGTLNLIRAIVSADEPRMSIRAIYLAIRVVKNTISDTRSKVRMAILHIIGQLALCGYQERIKGWGLKYLSVQLTLSTYKLTNRREKFYQRDLEERMVHKVTMDTVKIITSSVSGMTTEFWVRLLCYIMETDYVEALTPICISLTNLAEHQLHGQDVDVSVAGKSRQVDLPAPQKLLARLLVLMSSPYKGEGRGIAMLNLLRTLSQSIAPSMADMWELEIALLVRYLEEHTEFTWDQKAWEDKLIQFLRNSLKKTRGSSWSLRLSKELNNQIASFDSPSLEKGFLYRALGFTLATGLEASKVEVLLLELLYKTDYSNDFDSEGVIMCFGLCARGQVKTVLNVLHDFEERIQESEQSWQISAWRKDHPWRRETVKSALMVMYSCVASYCHPQLLLNLVDSPITAKIIHHYVSSCQDICLKMAFMKSVVQVTKAINNIKDLEDFHFAQKTTLTSIIVAVIKAEPTDNLVSPVRALAMEALSHLSKLKPFYSTEENSELMDISIHSVISLQLPGEDNESIKTLYANALSSLEQLMESLLQRQLDPKGLQEMVQLLEKWILSEKEWEREKAVSLHLYLMWIYVHSTAVCIHLKLGQFGTMVGLIAPCTCDAHQRTRMASMNVLSSLLDLHASQTCSLWGPSKQKELEKCKGDLQSTDVEKIFCASSRIAKVVCMEFSCDEVVSLIQKLCENTGAMNLQHDKASVTWIAFFLQMRAKELEDKVAEILSAILVHLPVVDHPEVRRLLIDGILLLAHHHQETILTSLLRQPLPMESHLAEVWLAVSENVPFARTMLHSLMGRLQSRLSPRISATSKADIWRLAAVDPLMTLCTIHLLIQKLDENDKLPDFLPDLIYTLLLQLGSSHRPEAAPPVLKMWKLVHTTPLPEEMNLQRVTIKSMQLLFKRVKSQHLAHTLDEQAVWDLLQDGGTFLEGVSLLARLCMQHVEGHRQRLAELVLRGMDSEVLSCRISSTAVCFMSGPVLYQEKLLKPAALLLEKGADQEEDEALRVLSLRALGNMALGAPKKVKQYRKVLLEKCLGPLREPVSNSVTAEGMEALTKILAELREGDVGSSFDAMSEQCRIFFDNESELLRLKAFILFGKLARVVGMSKKHFFKGEVKKAWIPLMLHSQDPCSNAAQACMATMFQCVHFWGWKSLEHPSGPSDTATDDKMTVFQTTMCSILTRKKPAVLYRFLLETMAYVKNNLSRIRIAACNLAGIIMKQMSTHYLKKLDFPALRNSLQELQLDPDPGVRRAALETLTVLDSCSQHGFLASPQGMS.

A disordered region spans residues 1-26 (MTEAITEAAVASSEEVSEERDDLGPL). 14 HEAT repeats span residues 73–96 (ATTE…ISTQ), 97–133 (RKVN…EMRE), 195–234 (MPYM…TVQF), 254–292 (LKVF…LLLP), 382–419 (SYPK…ADEP), 424–461 (RAIY…CGYQ), 573–612 (PAPQ…SIAP), 615–641 (ADMW…DQKA), 642–679 (WEDK…SFDS), 739–776 (KTVL…ETVK), 993–1030 (GQFG…LHAS), 1221–1263 (DPLM…SHRP), 1381–1420 (EKLL…GAPK), and 1627–1674 (LDFP…QGMS).

The chain is Maestro heat-like repeat-containing protein family member 2A (MROH2A) from Homo sapiens (Human).